The sequence spans 94 residues: Co-chaperonin GroES (94 aa).

It belongs to the GroES chaperonin family. Heptamer of 7 subunits arranged in a ring. Interacts with the chaperonin GroEL.

The protein localises to the cytoplasm. In terms of biological role, together with the chaperonin GroEL, plays an essential role in assisting protein folding. The GroEL-GroES system forms a nano-cage that allows encapsulation of the non-native substrate proteins and provides a physical environment optimized to promote and accelerate protein folding. GroES binds to the apical surface of the GroEL ring, thereby capping the opening of the GroEL channel. The sequence is that of Co-chaperonin GroES from Bacillus subtilis (strain 168).